Consider the following 88-residue polypeptide: Cell division topological specificity factor (88 aa).

The protein belongs to the MinE family.

Prevents the cell division inhibition by proteins MinC and MinD at internal division sites while permitting inhibition at polar sites. This ensures cell division at the proper site by restricting the formation of a division septum at the midpoint of the long axis of the cell. The polypeptide is Cell division topological specificity factor (Methylibium petroleiphilum (strain ATCC BAA-1232 / LMG 22953 / PM1)).